Here is a 472-residue protein sequence, read N- to C-terminus: Serine incorporator 3 (472 aa).

Over 1-95 the chain is Extracellular; the sequence is MGAVLGVFSL…KECDVLVRYK (95 aa). Residue Asn-34 is glycosylated (N-linked (GlcNAc...) asparagine). Residues 96-116 traverse the membrane as a helical segment; the sequence is AVYRISFALAVFFFAFSLLML. Residues 117 to 131 lie on the Cytoplasmic side of the membrane; sequence NVKTSKDPRAAIHNG. A helical membrane pass occupies residues 132-152; the sequence is FWFFKIAAIVGVMVGSFYIPG. At 153–158 the chain is on the extracellular side; it reads GHFNTA. The chain crosses the membrane as a helical span at residues 159–179; the sequence is WFVIGMVGAAFFILIQLVLLV. Residues 180–202 lie on the Cytoplasmic side of the membrane; that stretch reads DFAHSWNESWVNRMEEGNPKCWY. The chain crosses the membrane as a helical span at residues 203 to 223; it reads AALLSVTSLFYILSIIFAGLL. At 224 to 238 the chain is on the extracellular side; sequence YTYYTKPDGCTENKF. A helical transmembrane segment spans residues 239-259; sequence FISFNLILCVVISVLSIHPKI. Residues 260–328 lie on the Cytoplasmic side of the membrane; sequence QEHQPRSGLL…APTPAVPLQS (69 aa). Residues 329-349 form a helical membrane-spanning segment; that stretch reads GPSLNKENFIGLLVFVLSLSY. Residues 350 to 405 lie on the Extracellular side of the membrane; sequence SSIRNSSNSQVSKLTLSGSDSVILRDTAANGASDEEDGRPRRAVDNEREGVQYNYS. The N-linked (GlcNAc...) asparagine glycan is linked to Asn-354. Ser-370 carries the post-translational modification Phosphoserine. Asn-403 carries an N-linked (GlcNAc...) asparagine glycan. A helical transmembrane segment spans residues 406–426; it reads MFHLMLCSASLYIMMTLTNWY. The Cytoplasmic segment spans residues 427–445; that stretch reads SPDANFQSMTSKWPAVWVK. Residues 446-466 traverse the membrane as a helical segment; that stretch reads ISSSWVCLLLYVWTLVAPLVL. Over 467–472 the chain is Extracellular; the sequence is TNRDFS.

It belongs to the TDE1 family. N-glycosylated.

The protein resides in the cell membrane. It is found in the golgi apparatus membrane. The enzyme catalyses a 1,2-diacyl-sn-glycero-3-phospho-L-serine(in) = a 1,2-diacyl-sn-glycero-3-phospho-L-serine(out). The catalysed reaction is a 1,2-diacyl-sn-glycero-3-phosphocholine(in) = a 1,2-diacyl-sn-glycero-3-phosphocholine(out). It catalyses the reaction a 1,2-diacyl-sn-glycero-3-phosphoethanolamine(in) = a 1,2-diacyl-sn-glycero-3-phosphoethanolamine(out). In terms of biological role, restriction factor required to restrict infectivity of gammaretroviruses: acts by inhibiting an early step of viral infection. Impairs the penetration of the viral particle into the cytoplasm. Non-ATP-dependent, non-specific lipid transporter for phosphatidylserine, phosphatidylcholine, and phosphatidylethanolamine. Functions as a scramblase that flips lipids in both directions across the membrane. Phospholipid scrambling results in gammaretroviral surface exposure of phosphatidylserine and loss of membrane asymmetry, which leads to loss of infectivity. In Bos taurus (Bovine), this protein is Serine incorporator 3 (SERINC3).